The primary structure comprises 106 residues: uncharacterized protein (106 aa).

3 helical membrane-spanning segments follow: residues 5–27 (IFVI…GIII), 42–64 (AVAA…LAYM), and 76–98 (LPYI…TNFF).

The protein localises to the cell membrane. This is an uncharacterized protein from Archaeoglobus fulgidus (strain ATCC 49558 / DSM 4304 / JCM 9628 / NBRC 100126 / VC-16).